Consider the following 852-residue polypeptide: Tiger protein I3 (852 aa).

The first 18 residues, methionine 1–serine 18, serve as a signal peptide directing secretion. The Extracellular segment spans residues tyrosine 19–asparagine 830. Residues asparagine 31, asparagine 47, asparagine 67, asparagine 97, asparagine 129, asparagine 201, asparagine 215, asparagine 228, asparagine 260, asparagine 323, asparagine 352, asparagine 356, asparagine 404, asparagine 441, asparagine 476, asparagine 483, asparagine 501, asparagine 512, asparagine 574, asparagine 592, asparagine 635, asparagine 658, asparagine 661, asparagine 679, asparagine 680, asparagine 723, asparagine 757, asparagine 761, asparagine 773, asparagine 785, and asparagine 800 are each glycosylated (N-linked (GlcNAc...) asparagine). The 78-residue stretch at isoleucine 290–aspartate 367 folds into the IPT/TIG domain. A helical transmembrane segment spans residues isoleucine 831–asparagine 851. A topological domain (cytoplasmic) is located at residue isoleucine 852.

It is found in the membrane. The sequence is that of Tiger protein I3 (tgrI3) from Dictyostelium discoideum (Social amoeba).